Here is a 494-residue protein sequence, read N- to C-terminus: Glycerol kinase (494 aa).

Threonine 12 contacts ADP. Residues threonine 12, threonine 13, and serine 14 each contribute to the ATP site. Threonine 12 provides a ligand contact to sn-glycerol 3-phosphate. Arginine 16 lines the ADP pocket. Sn-glycerol 3-phosphate is bound by residues arginine 82, glutamate 83, tyrosine 134, and aspartate 243. The glycerol site is built by arginine 82, glutamate 83, tyrosine 134, aspartate 243, and glutamine 244. ADP contacts are provided by threonine 265 and glycine 308. ATP contacts are provided by threonine 265, glycine 308, glutamine 312, and glycine 408. The ADP site is built by glycine 408 and asparagine 412.

This sequence belongs to the FGGY kinase family.

The catalysed reaction is glycerol + ATP = sn-glycerol 3-phosphate + ADP + H(+). Its pathway is polyol metabolism; glycerol degradation via glycerol kinase pathway; sn-glycerol 3-phosphate from glycerol: step 1/1. With respect to regulation, inhibited by fructose 1,6-bisphosphate (FBP). Functionally, key enzyme in the regulation of glycerol uptake and metabolism. Catalyzes the phosphorylation of glycerol to yield sn-glycerol 3-phosphate. The sequence is that of Glycerol kinase from Marinomonas sp. (strain MWYL1).